A 131-amino-acid polypeptide reads, in one-letter code: MIQIVFDSKTGNVQRFVDKTPFRNKRKVSTEEYLDEPFVLITYTTGFGEVPKTTEMFLEKNAHLLLGVAASGNRVWGDNFAKSAEKISKQYQVPILGKFELSGTAKDVELFTQEVERVVTKSSAKMDPVKQ.

This sequence belongs to the NrdI family.

Its function is as follows. Probably involved in ribonucleotide reductase function. The protein is Protein NrdI of Bacillus licheniformis (strain ATCC 14580 / DSM 13 / JCM 2505 / CCUG 7422 / NBRC 12200 / NCIMB 9375 / NCTC 10341 / NRRL NRS-1264 / Gibson 46).